The primary structure comprises 298 residues: HTH-type transcriptional regulator ArgP (298 aa).

In terms of domain architecture, HTH lysR-type spans 4 to 60 (LDYKWIEALDAVVAQGGFERAAEELYISQSAVSQRIKQLERFLAQSVLIREQPPKPT). Positions 21–40 (FERAAEELYISQSAVSQRIK) form a DNA-binding region, H-T-H motif.

Belongs to the LysR transcriptional regulatory family. As to quaternary structure, homodimer.

Functionally, controls the transcription of genes involved in arginine and lysine metabolism. The chain is HTH-type transcriptional regulator ArgP from Vibrio vulnificus (strain YJ016).